The primary structure comprises 272 residues: FAS1 domain-containing protein YDR262W (272 aa).

The first 26 residues, 1 to 26 (MIFNLPVSVLLYFSLIWAMEPSFVRG), serve as a signal peptide directing secretion. The region spanning 100–269 (PLSLESKLSL…GVILMVDFTL (170 aa)) is the FAS1 domain.

The protein localises to the vacuole. This chain is FAS1 domain-containing protein YDR262W, found in Saccharomyces cerevisiae (strain ATCC 204508 / S288c) (Baker's yeast).